Reading from the N-terminus, the 405-residue chain is Cytoplasmic tRNA 2-thiolation protein 2 (405 aa).

The protein belongs to the CTU2/NCS2 family.

Its subcellular location is the cytoplasm. It participates in tRNA modification; 5-methoxycarbonylmethyl-2-thiouridine-tRNA biosynthesis. Its function is as follows. Plays a central role in 2-thiolation of mcm(5)S(2)U at tRNA wobble positions of tRNA(Lys), tRNA(Glu) and tRNA(Gln). May act by forming a heterodimer with NCS6/CTU1 that ligates sulfur from thiocarboxylated URM1 onto the uridine of tRNAs at wobble position. The protein is Cytoplasmic tRNA 2-thiolation protein 2 of Drosophila pseudoobscura pseudoobscura (Fruit fly).